We begin with the raw amino-acid sequence, 827 residues long: Periplasmic nitrate reductase (827 aa).

The tat-type signal signal peptide spans 1 to 32 (MELNRRDFMKANAAMAAAAAAGMTIPVKNVYA). One can recognise a 4Fe-4S Mo/W bis-MGD-type domain in the interval 37-93 (IRWDKAPCRFCGTGCSVLVGTKDGRVVATQGDPDAEVNRGLNCIKGYFLSKIMYGAD). [4Fe-4S] cluster-binding residues include C44, C47, C51, and C79. Mo-bis(molybdopterin guanine dinucleotide)-binding positions include K81, Q148, N173, C177, 210-217 (WGSNMAEM), 241-245 (STFEH), M371, Q375, N481, 507-508 (SD), K530, D557, and 717-726 (TGRVLEHWHT). Substrate is bound at residue F793. N801 and K818 together coordinate Mo-bis(molybdopterin guanine dinucleotide).

It belongs to the prokaryotic molybdopterin-containing oxidoreductase family. NasA/NapA/NarB subfamily. As to quaternary structure, component of the periplasmic nitrate reductase NapAB complex composed of NapA and NapB. The cofactor is [4Fe-4S] cluster. Mo-bis(molybdopterin guanine dinucleotide) is required as a cofactor. In terms of processing, predicted to be exported by the Tat system. The position of the signal peptide cleavage has not been experimentally proven.

It localises to the periplasm. The enzyme catalyses 2 Fe(II)-[cytochrome] + nitrate + 2 H(+) = 2 Fe(III)-[cytochrome] + nitrite + H2O. Its function is as follows. Catalytic subunit of the periplasmic nitrate reductase complex NapAB. Receives electrons from NapB and catalyzes the reduction of nitrate to nitrite. In Actinobacillus pleuropneumoniae serotype 7 (strain AP76), this protein is Periplasmic nitrate reductase.